A 249-amino-acid polypeptide reads, in one-letter code: Type III pantothenate kinase (249 aa).

8 to 15 (DAGNSRLK) contributes to the ATP binding site. Substrate-binding positions include tyrosine 95 and 102–105 (GVDR). Catalysis depends on aspartate 104, which acts as the Proton acceptor. Aspartate 125 provides a ligand contact to K(+). Threonine 128 serves as a coordination point for ATP. Threonine 179 contacts substrate.

Belongs to the type III pantothenate kinase family. Homodimer. NH4(+) is required as a cofactor. K(+) serves as cofactor.

It is found in the cytoplasm. The catalysed reaction is (R)-pantothenate + ATP = (R)-4'-phosphopantothenate + ADP + H(+). The protein operates within cofactor biosynthesis; coenzyme A biosynthesis; CoA from (R)-pantothenate: step 1/5. Catalyzes the phosphorylation of pantothenate (Pan), the first step in CoA biosynthesis. The sequence is that of Type III pantothenate kinase from Alkalilimnicola ehrlichii (strain ATCC BAA-1101 / DSM 17681 / MLHE-1).